Here is a 43-residue protein sequence, read N- to C-terminus: Protein PsbN (43 aa).

A helical membrane pass occupies residues 5–25 (LILSIFIFSLLLGITSYSIYI).

The protein belongs to the PsbN family.

It localises to the plastid. It is found in the chloroplast thylakoid membrane. In terms of biological role, may play a role in photosystem I and II biogenesis. The polypeptide is Protein PsbN (Cyanidium caldarium (Red alga)).